The sequence spans 931 residues: Valine--tRNA ligase (931 aa).

Residues 42–52 (PNVTGSLHMGH) carry the 'HIGH' region motif. The 'KMSKS' region signature appears at 523–527 (KMSKS). K526 contacts ATP. Residues 859–931 (MAGLIDKEAE…EEQLEKIKYL (73 aa)) adopt a coiled-coil conformation.

This sequence belongs to the class-I aminoacyl-tRNA synthetase family. ValS type 1 subfamily. In terms of assembly, monomer.

The protein resides in the cytoplasm. It carries out the reaction tRNA(Val) + L-valine + ATP = L-valyl-tRNA(Val) + AMP + diphosphate. Catalyzes the attachment of valine to tRNA(Val). As ValRS can inadvertently accommodate and process structurally similar amino acids such as threonine, to avoid such errors, it has a 'posttransfer' editing activity that hydrolyzes mischarged Thr-tRNA(Val) in a tRNA-dependent manner. This is Valine--tRNA ligase from Alcanivorax borkumensis (strain ATCC 700651 / DSM 11573 / NCIMB 13689 / SK2).